The chain runs to 424 residues: Glutamate-1-semialdehyde 2,1-aminomutase (424 aa).

Position 263 is an N6-(pyridoxal phosphate)lysine (K263).

The protein belongs to the class-III pyridoxal-phosphate-dependent aminotransferase family. HemL subfamily. Homodimer. Requires pyridoxal 5'-phosphate as cofactor.

It is found in the cytoplasm. The catalysed reaction is (S)-4-amino-5-oxopentanoate = 5-aminolevulinate. It functions in the pathway porphyrin-containing compound metabolism; protoporphyrin-IX biosynthesis; 5-aminolevulinate from L-glutamyl-tRNA(Glu): step 2/2. The chain is Glutamate-1-semialdehyde 2,1-aminomutase from Campylobacter jejuni subsp. jejuni serotype O:2 (strain ATCC 700819 / NCTC 11168).